We begin with the raw amino-acid sequence, 125 residues long: Splicing factor 3B subunit 6 (125 aa).

An interaction with pre-mRNA branch site region spans residues 16-29 (EVNRILYIRNLPYK). The RRM domain maps to 19–94 (RILYIRNLPY…RYLVVLYYNA (76 aa)). Lys29 carries the N6-acetyllysine; alternate modification. A Glycyl lysine isopeptide (Lys-Gly) (interchain with G-Cter in SUMO2); alternate cross-link involves residue Lys29. Position 41 is an N6-acetyllysine (Lys41).

In terms of assembly, component of the 17S U2 SnRNP complex, a ribonucleoprotein complex that contains small nuclear RNA (snRNA) U2 and a number of specific proteins. Part of the SF3B subcomplex of the 17S U2 SnRNP complex. SF3B associates with the splicing subcomplex SF3A and a 12S RNA unit to form the U2 small nuclear ribonucleoproteins complex (U2 snRNP). Within the SF3B complex interacts directly with SF3B1. Component of the minor spliceosome, which splices U12-type introns.

It is found in the nucleus. In terms of biological role, component of the 17S U2 SnRNP complex of the spliceosome, a large ribonucleoprotein complex that removes introns from transcribed pre-mRNAs. The 17S U2 SnRNP complex (1) directly participates in early spliceosome assembly and (2) mediates recognition of the intron branch site during pre-mRNA splicing by promoting the selection of the pre-mRNA branch-site adenosine, the nucleophile for the first step of splicing. Within the 17S U2 SnRNP complex, SF3B6 is part of the SF3B subcomplex, which is required for 'A' complex assembly formed by the stable binding of U2 snRNP to the branchpoint sequence in pre-mRNA. Sequence independent binding of SF3A and SF3B subcomplexes upstream of the branch site is essential, it may anchor U2 snRNP to the pre-mRNA. Within the 17S U2 SnRNP complex, SF3B6 directly contacts the pre-mRNA branch site adenosine for the first catalytic step of splicing. SF3B6 stabilizes the intron branch site-U2 snRNA duplex, thereby promoting-binding of introns with poor sequence complementarity. Also acts as a component of the minor spliceosome, which is involved in the splicing of U12-type introns in pre-mRNAs. The sequence is that of Splicing factor 3B subunit 6 (Sf3b6) from Mus musculus (Mouse).